The following is a 209-amino-acid chain: Uracil phosphoribosyltransferase (209 aa).

5-phospho-alpha-D-ribose 1-diphosphate contacts are provided by residues Arg-79, Arg-104, and Asp-131–Ser-139. Uracil is bound by residues Ile-194 and Gly-199–Ala-201. Asp-200 provides a ligand contact to 5-phospho-alpha-D-ribose 1-diphosphate.

This sequence belongs to the UPRTase family. It depends on Mg(2+) as a cofactor.

The catalysed reaction is UMP + diphosphate = 5-phospho-alpha-D-ribose 1-diphosphate + uracil. It participates in pyrimidine metabolism; UMP biosynthesis via salvage pathway; UMP from uracil: step 1/1. With respect to regulation, allosterically activated by GTP. Functionally, catalyzes the conversion of uracil and 5-phospho-alpha-D-ribose 1-diphosphate (PRPP) to UMP and diphosphate. The chain is Uracil phosphoribosyltransferase from Levilactobacillus brevis (strain ATCC 367 / BCRC 12310 / CIP 105137 / JCM 1170 / LMG 11437 / NCIMB 947 / NCTC 947) (Lactobacillus brevis).